The primary structure comprises 122 residues: Large ribosomal subunit protein uL14 (122 aa).

The protein belongs to the universal ribosomal protein uL14 family. In terms of assembly, part of the 50S ribosomal subunit. Forms a cluster with proteins L3 and L19. In the 70S ribosome, L14 and L19 interact and together make contacts with the 16S rRNA in bridges B5 and B8.

Functionally, binds to 23S rRNA. Forms part of two intersubunit bridges in the 70S ribosome. This chain is Large ribosomal subunit protein uL14, found in Brucella abortus (strain 2308).